A 446-amino-acid chain; its full sequence is Adenylosuccinate synthetase (446 aa).

Residues 12-18 and 40-42 contribute to the GTP site; these read GDEGKGK and GHT. D13 (proton acceptor) is an active-site residue. Mg(2+)-binding residues include D13 and G40. IMP is bound by residues 13 to 16, 38 to 41, T128, R142, Q223, T238, and R302; these read DEGK and NAGH. Catalysis depends on H41, which acts as the Proton donor. 298 to 304 contributes to the substrate binding site; that stretch reads TTTGRRR. GTP is bound by residues R304, 330-332, and 412-414; these read KLD and SLG.

This sequence belongs to the adenylosuccinate synthetase family. In terms of assembly, homodimer. Mg(2+) is required as a cofactor.

It localises to the cytoplasm. The catalysed reaction is IMP + L-aspartate + GTP = N(6)-(1,2-dicarboxyethyl)-AMP + GDP + phosphate + 2 H(+). It functions in the pathway purine metabolism; AMP biosynthesis via de novo pathway; AMP from IMP: step 1/2. In terms of biological role, plays an important role in the de novo pathway of purine nucleotide biosynthesis. Catalyzes the first committed step in the biosynthesis of AMP from IMP. This chain is Adenylosuccinate synthetase, found in Crocosphaera subtropica (strain ATCC 51142 / BH68) (Cyanothece sp. (strain ATCC 51142)).